We begin with the raw amino-acid sequence, 152 residues long: Transcription factor XE1.1 (152 aa).

Disordered stretches follow at residues 1–54 and 123–152; these read RDDF…ANNA and KVSAVSAEPPNTHPGVHPGLTDTTNPMGHM. 2 stretches are compositionally biased toward basic and acidic residues: residues 7–22 and 38–54; these read DDMKSDDESSQKEMKS and PEQKVEREKERRMANNA. Residues 47–100 enclose the bHLH domain; it reads ERRMANNARERLRVRDINEAFKELGRMCQLHLKSEKPQTKLLILHQAVAVILNL. The class A specific domain stretch occupies residues 102 to 125; it reads QQVRERNLNPKAACLKRREEEKVS. A compositionally biased stretch (polar residues) spans 143 to 152; the sequence is TDTTNPMGHM.

In terms of assembly, efficient DNA binding requires dimerization with another bHLH protein. Forms homo- or heterooligomers with myogenin, E12 and ITF2 proteins.

Its subcellular location is the nucleus. Transcriptional regulator. Involved in the initiation of neuronal differentiation. Activates transcription by binding to the E box-containing promoter. The chain is Transcription factor XE1.1 from Xenopus laevis (African clawed frog).